A 90-amino-acid chain; its full sequence is Small ribosomal subunit protein uS15 (90 aa).

The protein belongs to the universal ribosomal protein uS15 family. In terms of assembly, part of the 30S ribosomal subunit. Forms a bridge to the 50S subunit in the 70S ribosome, contacting the 23S rRNA.

One of the primary rRNA binding proteins, it binds directly to 16S rRNA where it helps nucleate assembly of the platform of the 30S subunit by binding and bridging several RNA helices of the 16S rRNA. In terms of biological role, forms an intersubunit bridge (bridge B4) with the 23S rRNA of the 50S subunit in the ribosome. The protein is Small ribosomal subunit protein uS15 of Mycoplasmoides gallisepticum (strain R(low / passage 15 / clone 2)) (Mycoplasma gallisepticum).